A 465-amino-acid chain; its full sequence is ATP synthase subunit beta (465 aa).

Position 152–159 (152–159) interacts with ATP; it reads GGAGVGKT.

The protein belongs to the ATPase alpha/beta chains family. F-type ATPases have 2 components, CF(1) - the catalytic core - and CF(0) - the membrane proton channel. CF(1) has five subunits: alpha(3), beta(3), gamma(1), delta(1), epsilon(1). CF(0) has three main subunits: a(1), b(2) and c(9-12). The alpha and beta chains form an alternating ring which encloses part of the gamma chain. CF(1) is attached to CF(0) by a central stalk formed by the gamma and epsilon chains, while a peripheral stalk is formed by the delta and b chains.

It is found in the cell inner membrane. It catalyses the reaction ATP + H2O + 4 H(+)(in) = ADP + phosphate + 5 H(+)(out). Produces ATP from ADP in the presence of a proton gradient across the membrane. The catalytic sites are hosted primarily by the beta subunits. This chain is ATP synthase subunit beta, found in Campylobacter jejuni subsp. jejuni serotype O:6 (strain 81116 / NCTC 11828).